A 37-amino-acid polypeptide reads, in one-letter code: Large ribosomal subunit protein bL36 (37 aa).

Belongs to the bacterial ribosomal protein bL36 family.

This is Large ribosomal subunit protein bL36 from Staphylococcus saprophyticus subsp. saprophyticus (strain ATCC 15305 / DSM 20229 / NCIMB 8711 / NCTC 7292 / S-41).